The chain runs to 102 residues: Bowman-Birk type wound-induced proteinase inhibitor WIP1 (102 aa).

Residues 1 to 15 form the signal peptide; the sequence is MKSSPHLVLILCLQA. Cystine bridges form between Cys-46–Cys-102, Cys-47–Cys-60, Cys-50–Cys-98, Cys-67–Cys-74, and Cys-71–Cys-90.

The protein belongs to the Bowman-Birk serine protease inhibitor family.

The protein is Bowman-Birk type wound-induced proteinase inhibitor WIP1 (WIP1) of Zea mays (Maize).